An 89-amino-acid chain; its full sequence is Small ribosomal subunit protein uS15 (89 aa).

This sequence belongs to the universal ribosomal protein uS15 family. Part of the 30S ribosomal subunit. Forms a bridge to the 50S subunit in the 70S ribosome, contacting the 23S rRNA.

Functionally, one of the primary rRNA binding proteins, it binds directly to 16S rRNA where it helps nucleate assembly of the platform of the 30S subunit by binding and bridging several RNA helices of the 16S rRNA. Forms an intersubunit bridge (bridge B4) with the 23S rRNA of the 50S subunit in the ribosome. The chain is Small ribosomal subunit protein uS15 from Mycobacterium avium (strain 104).